Consider the following 485-residue polypeptide: Glutamyl-tRNA(Gln) amidotransferase subunit A (485 aa).

Residues lysine 78 and serine 153 each act as charge relay system in the active site. The active-site Acyl-ester intermediate is the serine 177.

It belongs to the amidase family. GatA subfamily. As to quaternary structure, heterotrimer of A, B and C subunits.

It carries out the reaction L-glutamyl-tRNA(Gln) + L-glutamine + ATP + H2O = L-glutaminyl-tRNA(Gln) + L-glutamate + ADP + phosphate + H(+). In terms of biological role, allows the formation of correctly charged Gln-tRNA(Gln) through the transamidation of misacylated Glu-tRNA(Gln) in organisms which lack glutaminyl-tRNA synthetase. The reaction takes place in the presence of glutamine and ATP through an activated gamma-phospho-Glu-tRNA(Gln). This chain is Glutamyl-tRNA(Gln) amidotransferase subunit A, found in Bacillus cereus (strain 03BB102).